The sequence spans 25 residues: Chrysophsin-1 (25 aa).

His-25 carries the histidine amide modification.

As to expression, gill. Localized in certain epithelial cells lining the surface of secondary lamellae and eosinophilic granule cell-like cells at the base of secondary lamellae.

The protein resides in the secreted. Has antibacterial activity against Gram-positive bacteria B.subtilis ATCC 6633, L.garvieae ATCC 49156 and S.iniae F-8502, and Gram-negative bacteria E.coli WT-2, V.anguillarum ATCC 19264, V.penaeicida KHA, V.harveyi ATCC 14126, V.vulnificus ATCC 33148, A.salmonicida NCMB 1102 and P.putida ATCC 12633. Has hemolytic activity against human red blood cells. Seems to disrupt the membranes by adopting an alpha helical conformation. May play a significant role in innate host defense. The polypeptide is Chrysophsin-1 (Pagrus major (Red sea bream)).